The following is a 523-amino-acid chain: DNA-(apurinic or apyrimidinic site) endonuclease 2 (523 aa).

Glu42 contributes to the Mg(2+) binding site. The active site involves Tyr151. Mg(2+) is bound by residues Asp191, Asn193, and Asp294. Catalysis depends on Asp191, which acts as the Proton donor/acceptor. The segment at 348–392 (MKKNKNNSPTQSENVSASASSGSSPTVSRANSVIDVDAYPPEKRR) is disordered. A compositionally biased stretch (polar residues) spans 353–362 (NNSPTQSENV). Positions 458, 461, 484, and 508 each coordinate Zn(2+). The GRF-type zinc-finger motif lies at 458-517 (CEGHKEPCKYLTVRKPGINYGRKFWICARPVGELIKNSNAVSEEDTQPFQCRFFIWDSDW).

This sequence belongs to the DNA repair enzymes AP/ExoA family. Mg(2+) serves as cofactor. It depends on Mn(2+) as a cofactor.

It is found in the nucleus. The catalysed reaction is Exonucleolytic cleavage in the 3'- to 5'-direction to yield nucleoside 5'-phosphates.. In terms of biological role, DNA repair enzyme that cleaves apurinic/apyrimidinic (AP) sites and removes 3'-blocking groups present at single strand breaks of damaged DNA. Provides the majority of the AP-endonuclease (APE) activity. Repairs phleomycin D1-induced DNA damage. Plays a role in oxidative damage repair. The protein is DNA-(apurinic or apyrimidinic site) endonuclease 2 (apn2) of Schizosaccharomyces pombe (strain 972 / ATCC 24843) (Fission yeast).